The following is a 343-amino-acid chain: DNA-directed RNA polymerase subunit alpha (343 aa).

The alpha N-terminal domain (alpha-NTD) stretch occupies residues 1–239; the sequence is MGETVTIQKN…DQLNVFVNFE (239 aa). The alpha C-terminal domain (alpha-CTD) stretch occupies residues 255 to 343; the sequence is FNPAFLKKVD…ELAKRFEDHY (89 aa).

Belongs to the RNA polymerase alpha chain family. In terms of assembly, homodimer. The RNAP catalytic core consists of 2 alpha, 1 beta, 1 beta' and 1 omega subunit. When a sigma factor is associated with the core the holoenzyme is formed, which can initiate transcription.

It carries out the reaction RNA(n) + a ribonucleoside 5'-triphosphate = RNA(n+1) + diphosphate. In terms of biological role, DNA-dependent RNA polymerase catalyzes the transcription of DNA into RNA using the four ribonucleoside triphosphates as substrates. The sequence is that of DNA-directed RNA polymerase subunit alpha from Bradyrhizobium sp. (strain BTAi1 / ATCC BAA-1182).